A 116-amino-acid polypeptide reads, in one-letter code: Protein Rev (116 aa).

Phosphoserine; by host CK2 occurs at positions 5 and 8. Residues 18-26 (IIKILYQSN) are homomultimerization. A disordered region spans residues 24–49 (QSNPHPSPEGTRQARRNRRRRWRERQ). The Nuclear localization signal and RNA-binding (RRE) motif lies at 34–50 (TRQARRNRRRRWRERQR). The segment covering 36–47 (QARRNRRRRWRE) has biased composition (basic residues). The Nuclear export signal and binding to XPO1 signature appears at 73 to 84 (LQLPPLDRLTLD). Phosphoserine; by host is present on residues Ser-92 and Ser-99.

It belongs to the HIV-1 REV protein family. In terms of assembly, homomultimer; when bound to the RRE. Multimeric assembly is essential for activity and may involve XPO1. Binds to human KPNB1, XPO1, TNPO1, RANBP5 and IPO7. Interacts with the viral Integrase. Interacts with human KHDRBS1. Interacts with human NAP1; this interaction decreases Rev multimerization and stimulates its activity. Interacts with human DEAD-box helicases DDX3 and DDX24; these interactions may serve for viral RNA export to the cytoplasm and packaging, respectively. Interacts with human PSIP1; this interaction may inhibit HIV-1 DNA integration by promoting dissociation of the Integrase-LEDGF/p75 complex. In terms of processing, asymmetrically arginine dimethylated at one site by host PRMT6. Methylation impairs the RNA-binding activity and export of viral RNA from the nucleus to the cytoplasm. Post-translationally, phosphorylated by protein kinase CK2. Presence of, and maybe binding to the N-terminus of the regulatory beta subunit of CK2 is necessary for CK2-mediated Rev's phosphorylation.

The protein localises to the host nucleus. Its subcellular location is the host nucleolus. It is found in the host cytoplasm. In terms of biological role, escorts unspliced or incompletely spliced viral pre-mRNAs (late transcripts) out of the nucleus of infected cells. These pre-mRNAs carry a recognition sequence called Rev responsive element (RRE) located in the env gene, that is not present in fully spliced viral mRNAs (early transcripts). This function is essential since most viral proteins are translated from unspliced or partially spliced pre-mRNAs which cannot exit the nucleus by the pathway used by fully processed cellular mRNAs. Rev itself is translated from a fully spliced mRNA that readily exits the nucleus. Rev's nuclear localization signal (NLS) binds directly to KPNB1/Importin beta-1 without previous binding to KPNA1/Importin alpha-1. KPNB1 binds to the GDP bound form of RAN (Ran-GDP) and targets Rev to the nucleus. In the nucleus, the conversion from Ran-GDP to Ran-GTP dissociates Rev from KPNB1 and allows Rev's binding to the RRE in viral pre-mRNAs. Rev multimerization on the RRE via cooperative assembly exposes its nuclear export signal (NES) to the surface. Rev can then form a complex with XPO1/CRM1 and Ran-GTP, leading to nuclear export of the complex. Conversion from Ran-GTP to Ran-GDP mediates dissociation of the Rev/RRE/XPO1/RAN complex, so that Rev can return to the nucleus for a subsequent round of export. Beside KPNB1, also seems to interact with TNPO1/Transportin-1, RANBP5/IPO5 and IPO7/RANBP7 for nuclear import. The nucleoporin-like HRB/RIP is an essential cofactor that probably indirectly interacts with Rev to release HIV RNAs from the perinuclear region to the cytoplasm. The sequence is that of Protein Rev from Human immunodeficiency virus type 1 group M subtype B (isolate SF33) (HIV-1).